Reading from the N-terminus, the 217-residue chain is Large ribosomal subunit protein uL3 (217 aa).

The segment covering 134-146 has biased composition (polar residues); that stretch reads GRATHGNSRSHNV. The tract at residues 134-154 is disordered; that stretch reads GRATHGNSRSHNVPGSIGMAQ. Residue glutamine 154 is modified to N5-methylglutamine.

It belongs to the universal ribosomal protein uL3 family. Part of the 50S ribosomal subunit. Forms a cluster with proteins L14 and L19. In terms of processing, methylated by PrmB.

Its function is as follows. One of the primary rRNA binding proteins, it binds directly near the 3'-end of the 23S rRNA, where it nucleates assembly of the 50S subunit. This chain is Large ribosomal subunit protein uL3, found in Burkholderia lata (strain ATCC 17760 / DSM 23089 / LMG 22485 / NCIMB 9086 / R18194 / 383).